We begin with the raw amino-acid sequence, 46 residues long: PhoP/PhoQ regulator MgrB (46 aa).

A helical transmembrane segment spans residues 6–26; it reads WVALVVVVLACLLLWAQVFNM.

It belongs to the MgrB family. As to quaternary structure, may form homooligomers. Probably interacts with the periplasmic domain of PhoQ.

The protein localises to the cell inner membrane. Its function is as follows. PhoP-regulated transcription is redox-sensitive, being activated when the periplasm becomes more reducing. MgrB acts between DsbA/DsbB and PhoP/PhoQ in this pathway. Represses PhoP/PhoQ signaling, possibly by binding to the periplasmic domain of PhoQ, altering its activity and that of downstream effector PhoP. The chain is PhoP/PhoQ regulator MgrB from Escherichia coli O6:K15:H31 (strain 536 / UPEC).